The sequence spans 210 residues: Small ribosomal subunit protein uS3 (210 aa).

The KH type-2 domain occupies 39-107 (IREKLMEKLK…EILLDIQEVK (69 aa)).

Belongs to the universal ribosomal protein uS3 family. As to quaternary structure, part of the 30S ribosomal subunit. Forms a tight complex with proteins S10 and S14.

Its function is as follows. Binds the lower part of the 30S subunit head. Binds mRNA in the 70S ribosome, positioning it for translation. The sequence is that of Small ribosomal subunit protein uS3 from Opitutus terrae (strain DSM 11246 / JCM 15787 / PB90-1).